Here is a 1140-residue protein sequence, read N- to C-terminus: Protein FAM184A (1140 aa).

Coiled-coil stretches lie at residues 57-256 (ALNT…NKAQ), 296-800 (AILR…IEME), and 868-907 (RITDLQEELRHREHHISELDKEVQHLHENISALTKELEFK). A disordered region spans residues 1063 to 1128 (PNLSALESGG…EASPVASPDP (66 aa)).

It belongs to the FAM184 family.

The protein localises to the cytoplasm. It localises to the P-body. It is found in the cytoskeleton. Its subcellular location is the microtubule organizing center. The protein resides in the centrosome. The protein localises to the centriolar satellite. This Homo sapiens (Human) protein is Protein FAM184A.